We begin with the raw amino-acid sequence, 129 residues long: Phosphoribosyl-AMP cyclohydrolase (129 aa).

D76 contributes to the Mg(2+) binding site. C77 is a Zn(2+) binding site. D78 and D80 together coordinate Mg(2+). The Zn(2+) site is built by C97 and C104.

It belongs to the PRA-CH family. As to quaternary structure, homodimer. Mg(2+) serves as cofactor. It depends on Zn(2+) as a cofactor.

Its subcellular location is the cytoplasm. The catalysed reaction is 1-(5-phospho-beta-D-ribosyl)-5'-AMP + H2O = 1-(5-phospho-beta-D-ribosyl)-5-[(5-phospho-beta-D-ribosylamino)methylideneamino]imidazole-4-carboxamide. The protein operates within amino-acid biosynthesis; L-histidine biosynthesis; L-histidine from 5-phospho-alpha-D-ribose 1-diphosphate: step 3/9. Functionally, catalyzes the hydrolysis of the adenine ring of phosphoribosyl-AMP. This chain is Phosphoribosyl-AMP cyclohydrolase, found in Methylibium petroleiphilum (strain ATCC BAA-1232 / LMG 22953 / PM1).